The chain runs to 239 residues: Hydroxyacylglutathione hydrolase (239 aa).

7 residues coordinate Zn(2+): histidine 54, histidine 56, aspartate 58, histidine 59, histidine 112, aspartate 131, and histidine 169.

It belongs to the metallo-beta-lactamase superfamily. Glyoxalase II family. As to quaternary structure, monomer. Requires Zn(2+) as cofactor.

It carries out the reaction an S-(2-hydroxyacyl)glutathione + H2O = a 2-hydroxy carboxylate + glutathione + H(+). Its pathway is secondary metabolite metabolism; methylglyoxal degradation; (R)-lactate from methylglyoxal: step 2/2. In terms of biological role, thiolesterase that catalyzes the hydrolysis of S-D-lactoyl-glutathione to form glutathione and D-lactic acid. This Pelagibacter ubique (strain HTCC1062) protein is Hydroxyacylglutathione hydrolase.